A 137-amino-acid polypeptide reads, in one-letter code: Major seminal plasma glycoprotein PSP-II (137 aa).

Positions 1–21 are cleaved as a signal peptide; that stretch reads MKLGTAIPWALLLSTATLVST. Disulfide bonds link cysteine 30–cysteine 51 and cysteine 74–cysteine 95. The CUB domain occupies 30-131; sequence CGRVIKDTSG…SPFLIYFYGS (102 aa). N-linked (GlcNAc...) (complex) asparagine glycosylation is present at asparagine 119.

Monomer or heterodimer with PSP-I (depending on the type of glycosylation of PSP-I). Seminal plasma or sperm.

It is found in the secreted. This Sus scrofa (Pig) protein is Major seminal plasma glycoprotein PSP-II.